The primary structure comprises 273 residues: MGRLENKTAVITGAATGIGQATAEVFANEGARVIIGDINKDQMEETVDAIRKNGGQAESFHLDVSDENSVKAFADQIKDACGTIDILFNNAGVDQEGGKVHEYPVDLFDRIIAVDLRGTFLCSKYLIPLMLENGGSIINTSSMSGRAADLDRSGYNAAKGGITNLTKAMAIDYARNGIRVNSISPGTIETPLIDKLAGTKEQEMGEQFREANKWITPLGRLGQPKEMATVALFLASDDSSYVTGEDITADGGIMAYTWPGKMLIEEKWKEETK.

Position 10–34 (10–34 (VITGAATGIGQATAEVFANEGARVI)) interacts with NAD(+). Residue S142 participates in substrate binding. Y155 acts as the Proton acceptor in catalysis.

This sequence belongs to the short-chain dehydrogenases/reductases (SDR) family.

This is an uncharacterized protein from Bacillus subtilis (strain 168).